A 210-amino-acid polypeptide reads, in one-letter code: MNYDRIYSNLVNSAEHPSKPRQTKAGYELHHIIPRSMGGSDDLDNLVFLTYKAHYTAHHLLAKIYGGKMYDAYWIMSNSKHRKVTSSQYAYAKAKKFENQRGAKRSDKTKKLMSIARSKVTLPDDFGKRISDGLTGRTLSTNHKEHIKNSSRNRFNTKTVIGYSPDGNTIELTGATEIRNAGFFHSAVYKCCKGIQSIHKGYTWKYKDEL.

The HNH domain occupies 25-54 (AGYELHHIIPRSMGGSDDLDNLVFLTYKAH).

To phage T4 mobB and mobD.

This Escherichia coli (Bacteriophage T4) protein is Probable mobile endonuclease C (mobC).